Reading from the N-terminus, the 227-residue chain is 7-cyano-7-deazaguanine synthase (227 aa).

8–18 (FSGGQDSTTCL) serves as a coordination point for ATP. C187, C196, C199, and C202 together coordinate Zn(2+).

Belongs to the QueC family. Zn(2+) serves as cofactor.

It catalyses the reaction 7-carboxy-7-deazaguanine + NH4(+) + ATP = 7-cyano-7-deazaguanine + ADP + phosphate + H2O + H(+). The protein operates within purine metabolism; 7-cyano-7-deazaguanine biosynthesis. Catalyzes the ATP-dependent conversion of 7-carboxy-7-deazaguanine (CDG) to 7-cyano-7-deazaguanine (preQ(0)). This chain is 7-cyano-7-deazaguanine synthase, found in Aliivibrio fischeri (strain MJ11) (Vibrio fischeri).